The primary structure comprises 150 residues: MKIIARNKKALFDYSIIERFEAGIVLKGSEVVALRAGRANLKDSFVRIIKNEIFLLNSHISLLHTTHSFYKHEERGARKLLMHRKQIDKLLGKVSIEGYTIVALDLYFNTKNKVKATLALAKGKNLHDKRETLKKKQADLEAKAAMKNYK.

This sequence belongs to the SmpB family.

Its subcellular location is the cytoplasm. Required for rescue of stalled ribosomes mediated by trans-translation. Binds to transfer-messenger RNA (tmRNA), required for stable association of tmRNA with ribosomes. tmRNA and SmpB together mimic tRNA shape, replacing the anticodon stem-loop with SmpB. tmRNA is encoded by the ssrA gene; the 2 termini fold to resemble tRNA(Ala) and it encodes a 'tag peptide', a short internal open reading frame. During trans-translation Ala-aminoacylated tmRNA acts like a tRNA, entering the A-site of stalled ribosomes, displacing the stalled mRNA. The ribosome then switches to translate the ORF on the tmRNA; the nascent peptide is terminated with the 'tag peptide' encoded by the tmRNA and targeted for degradation. The ribosome is freed to recommence translation, which seems to be the essential function of trans-translation. This is SsrA-binding protein from Campylobacter jejuni (strain RM1221).